The chain runs to 81 residues: MQPIQIAIVALVVAIIIAIVVWSIVIIEYRKILRQRKIDRLIDRLIERAEDSGNESEGEISALAEMGVEMGHHAPWDVDDL.

Over 1-6 (MQPIQI) the chain is Extracellular. A helical transmembrane segment spans residues 7–27 (AIVALVVAIIIAIVVWSIVII). Topologically, residues 28–81 (EYRKILRQRKIDRLIDRLIERAEDSGNESEGEISALAEMGVEMGHHAPWDVDDL) are cytoplasmic. 2 positions are modified to phosphoserine; by host CK2: serine 52 and serine 56.

Belongs to the HIV-1 VPU protein family. Homopentamer. Interacts with host CD4 and BRTC; these interactions induce proteasomal degradation of CD4. Interacts with host BST2; this interaction leads to the degradation of host BST2. Interacts with host FBXW11. Interacts with host AP1M1; this interaction plays a role in the mistrafficking and subsequent degradation of host BST2. Interacts with host RANBP2; this interaction allows Vpu to down-regulate host BLM sumoylation. In terms of processing, phosphorylated by host CK2. This phosphorylation is necessary for interaction with human BTRC and degradation of CD4.

The protein localises to the host membrane. Ion channel activity is inhibited by hexamethylene amiloride in vitro. Its function is as follows. Enhances virion budding by targeting host CD4 and Tetherin/BST2 to proteasome degradation. Degradation of CD4 prevents any unwanted premature interactions between viral Env and its host receptor CD4 in the endoplasmic reticulum. Degradation of antiretroviral protein Tetherin/BST2 is important for virion budding, as BST2 tethers new viral particles to the host cell membrane. Mechanistically, Vpu bridges either CD4 or BST2 to BTRC, a substrate recognition subunit of the Skp1/Cullin/F-box protein E3 ubiquitin ligase, induces their ubiquitination and subsequent proteasomal degradation. The alteration of the E3 ligase specificity by Vpu seems to promote the degradation of host IKBKB, leading to NF-kappa-B down-regulation and subsequent apoptosis. Acts as a viroporin that forms an oligomeric ion channel in membranes. Modulates the host DNA repair mechanisms to promote degradation of nuclear viral cDNA in cells that are already productively infected in order to suppress immune sensing and proviral hyper-integration (superinfection). Manipulates PML-NBs and modulates SUMOylation of host BLM protein thereby enhancing its DNA-end processing activity toward viral unintegrated linear DNA. Also inhibits RAD52-mediated homologous repair of viral cDNA, preventing the generation of dead-end circular forms of single copies of the long terminal repeat and permitting sustained nucleolytic attack. The protein is Protein Vpu of Homo sapiens (Human).